The sequence spans 167 residues: Phospholipase A2 (167 aa).

The signal sequence occupies residues 1 to 18 (MQVVLGSLFLLLLSTSHG). A propeptide spanning residues 19 to 33 (WQIRDRIGDNELEER) is cleaved from the precursor. Positions 41, 43, and 45 each coordinate Ca(2+). 5 disulfides stabilise this stretch: Cys42–Cys64, Cys63–Cys103, Cys70–Cys96, Cys94–Cys128, and Cys138–Cys146. N-linked (GlcNAc...) asparagine glycosylation is present at Asn46. The active site involves His67. Residue Asp68 coordinates Ca(2+). Asp97 is a catalytic residue.

It belongs to the phospholipase A2 family. Group III subfamily. Ca(2+) is required as a cofactor. Post-translationally, N-glycosylated; contains mannose, N-acetylglucosamine and fucose alphal-6 and/or alphal-3 linked to the innermost N-acetylglucosamine. Expressed by the venom gland.

The protein localises to the secreted. It carries out the reaction a 1,2-diacyl-sn-glycero-3-phosphocholine + H2O = a 1-acyl-sn-glycero-3-phosphocholine + a fatty acid + H(+). In terms of biological role, in vivo, intraplantar injection in mice cause spontaneous pain behaviors and paw swelling. PLA2 catalyzes the calcium-dependent hydrolysis of the 2-acyl groups in 3-sn-phosphoglycerides. The sequence is that of Phospholipase A2 from Apis mellifera (Honeybee).